The following is a 149-amino-acid chain: H/ACA ribonucleoprotein complex subunit 2-like protein (149 aa).

It belongs to the eukaryotic ribosomal protein eL8 family. In terms of assembly, component of the small nucleolar ribonucleoprotein particle containing H/ACA-type snoRNAs (H/ACA snoRNPs). Component of the telomerase holoenzyme complex.

Its subcellular location is the nucleus. The protein localises to the nucleolus. Functionally, required for ribosome biogenesis. Part of a complex which catalyzes pseudouridylation of rRNA. This involves the isomerization of uridine such that the ribose is subsequently attached to C5, instead of the normal N1. Pseudouridine ('psi') residues may serve to stabilize the conformation of rRNAs. The protein is H/ACA ribonucleoprotein complex subunit 2-like protein (nhp2) of Xenopus laevis (African clawed frog).